A 1217-amino-acid polypeptide reads, in one-letter code: Splicing factor 3B subunit 3 (1217 aa).

Interaction with PHF5A, SF3B1 and SF3B5 regions lie at residues 105-119 and 145-168; these read ETFG…VPGQ and NRDA…TLVY. Serine 156 bears the Phosphoserine mark. 2 interaction with SF3B1 and SF3B5 regions span residues 193-231 and 786-804; these read DNDP…LEEH and RKFV…ETDH. The segment at 1028–1049 is interaction with SF3B1; sequence TYPRWVTTASLLDYDTVAGADK. The segment at 1100-1123 is interaction with SF3B5; it reads TVLSLQKTTLIPGGSESLVYTTLS. Threonine 1200 carries the phosphothreonine modification.

It belongs to the RSE1 family. In terms of assembly, component of the 17S U2 SnRNP complex, a ribonucleoprotein complex that contains small nuclear RNA (snRNA) U2 and a number of specific proteins. Part of the SF3B subcomplex of the 17S U2 SnRNP complex. SF3B associates with the splicing subcomplex SF3A and a 12S RNA unit to form the U2 small nuclear ribonucleoproteins complex (U2 snRNP). Within the SF3B subcomplex, interacts directly with SF3B1 (via HEAT domain), SF3B5 and PHF5A. Identified in the spliceosome A complex; remains associated with the spliceosome throughout the splicing process. Component of the spliceosome B complex. Identified in the spliceosome C complex. Identified in the spliceosome E complex. Component of the minor (U12-type spliceosome) spliceosome. Within this complex, interacts with SCNM1. Associates with the STAGA transcription coactivator-HAT complex. Interacts with SUPT3H. Interacts with TAF3.

Its subcellular location is the nucleus. Functionally, component of the 17S U2 SnRNP complex of the spliceosome, a large ribonucleoprotein complex that removes introns from transcribed pre-mRNAs. The 17S U2 SnRNP complex (1) directly participates in early spliceosome assembly and (2) mediates recognition of the intron branch site during pre-mRNA splicing by promoting the selection of the pre-mRNA branch-site adenosine, the nucleophile for the first step of splicing. Within the 17S U2 SnRNP complex, SF3B3 is part of the SF3B subcomplex, which is required for 'A' complex assembly formed by the stable binding of U2 snRNP to the branchpoint sequence in pre-mRNA. Sequence independent binding of SF3A and SF3B subcomplexes upstream of the branch site is essential, it may anchor U2 snRNP to the pre-mRNA. May also be involved in the assembly of the 'E' complex. Also acts as a component of the minor spliceosome, which is involved in the splicing of U12-type introns in pre-mRNAs. This is Splicing factor 3B subunit 3 (Sf3b3) from Mus musculus (Mouse).